A 321-amino-acid polypeptide reads, in one-letter code: Phosphate acyltransferase (321 aa).

Belongs to the PlsX family. In terms of assembly, homodimer. Probably interacts with PlsY.

Its subcellular location is the cytoplasm. It catalyses the reaction a fatty acyl-[ACP] + phosphate = an acyl phosphate + holo-[ACP]. It participates in lipid metabolism; phospholipid metabolism. Its function is as follows. Catalyzes the reversible formation of acyl-phosphate (acyl-PO(4)) from acyl-[acyl-carrier-protein] (acyl-ACP). This enzyme utilizes acyl-ACP as fatty acyl donor, but not acyl-CoA. The chain is Phosphate acyltransferase from Chlamydia trachomatis serovar A (strain ATCC VR-571B / DSM 19440 / HAR-13).